Here is a 179-residue protein sequence, read N- to C-terminus: Peptidyl-tRNA hydrolase 2, mitochondrial (179 aa).

A helical membrane pass occupies residues 15–37 (STLGLAVGVACGMCLGWSLRVCF). Residues K47, K76, K81, K95, K106, K115, K171, and K177 each participate in a glycyl lysine isopeptide (Lys-Gly) (interchain with G-Cter in ubiquitin) cross-link.

Belongs to the PTH2 family. As to quaternary structure, monomer. Post-translationally, ubiquitinated by PRKN during mitophagy, leading to its degradation and enhancement of mitophagy. Deubiquitinated by USP30.

The protein resides in the mitochondrion outer membrane. The enzyme catalyses an N-acyl-L-alpha-aminoacyl-tRNA + H2O = an N-acyl-L-amino acid + a tRNA + H(+). Peptidyl-tRNA hydrolase which releases tRNAs from the ribosome during protein synthesis. Promotes caspase-independent apoptosis by regulating the function of two transcriptional regulators, AES and TLE1. The sequence is that of Peptidyl-tRNA hydrolase 2, mitochondrial (PTRH2) from Homo sapiens (Human).